A 663-amino-acid chain; its full sequence is UvrABC system protein B (663 aa).

The region spanning 26 to 414 is the Helicase ATP-binding domain; sequence DGLESGLAKQ…DNVAEQVVRP (389 aa). Residue 39–46 participates in ATP binding; that stretch reads GVTGSGKT. A Beta-hairpin motif is present at residues 92 to 115; sequence YYDYYQPEAYVPASDTFIEKDASI. The region spanning 430 to 596 is the Helicase C-terminal domain; sequence QVDDLMSEIR…GINKSVEDIL (167 aa). Residues 624–659 enclose the UVR domain; it reads AKEINALEKQMYAHAQNMEFELAAKIRDEYLLLKEQ.

It belongs to the UvrB family. Forms a heterotetramer with UvrA during the search for lesions. Interacts with UvrC in an incision complex.

It localises to the cytoplasm. In terms of biological role, the UvrABC repair system catalyzes the recognition and processing of DNA lesions. A damage recognition complex composed of 2 UvrA and 2 UvrB subunits scans DNA for abnormalities. Upon binding of the UvrA(2)B(2) complex to a putative damaged site, the DNA wraps around one UvrB monomer. DNA wrap is dependent on ATP binding by UvrB and probably causes local melting of the DNA helix, facilitating insertion of UvrB beta-hairpin between the DNA strands. Then UvrB probes one DNA strand for the presence of a lesion. If a lesion is found the UvrA subunits dissociate and the UvrB-DNA preincision complex is formed. This complex is subsequently bound by UvrC and the second UvrB is released. If no lesion is found, the DNA wraps around the other UvrB subunit that will check the other stand for damage. This Legionella pneumophila (strain Paris) protein is UvrABC system protein B.